The primary structure comprises 416 residues: Enterobactin exporter EntS (416 aa).

Residues 1–21 (MNKQSWLLNLSLLKTHPAFRA) are Cytoplasmic-facing. A helical transmembrane segment spans residues 22–42 (VFLARFISIVSLGLLGVAVPV). Topologically, residues 43–55 (QIQMMTHSTWQVG) are periplasmic. Residues 56 to 76 (LSVTLTGGAMFVGLMVGGVLA) form a helical membrane-spanning segment. At 77-83 (DRYERKK) the chain is on the cytoplasmic side. A helical membrane pass occupies residues 84–104 (VILLARGTCGIGFIGLCLNAL). Topologically, residues 105 to 109 (LPEPS) are periplasmic. Residues 110 to 130 (LLAIYLLGLWDGFFASLGVTA) form a helical membrane-spanning segment. At 131-156 (LLAATPALVGRENLMQAGAITMLTVR) the chain is on the cytoplasmic side. Residues 157–177 (LGSVISPMIGGLLLATGGVAW) form a helical membrane-spanning segment. A topological domain (periplasmic) is located at residue asparagine 178. Residues 179–199 (YGLAAAGTFITLLPLLSLPAL) form a helical membrane-spanning segment. Residues 200–218 (PPPPQPREHPLKSLLAGFR) are Cytoplasmic-facing. The helical transmembrane segment at 219 to 239 (FLLASPLVGGIALLGGLLTMA) threads the bilayer. The Periplasmic segment spans residues 240–256 (SAVRVLYPALADNWQMS). Residues 257-277 (AAQIGFLYAAIPLGAAIGALT) traverse the membrane as a helical segment. The Cytoplasmic segment spans residues 278–287 (SGKLAHSARP). A helical transmembrane segment spans residues 288–307 (GLLMLLSTLGSFLAIGLFGL). Over 308–313 (MPMWIL) the chain is Periplasmic. The chain crosses the membrane as a helical span at residues 314-336 (GVVCLALFGWLSAVSSLLQYTML). At 337 to 356 (QTQTPEAMLGRINGLWTAQN) the chain is on the cytoplasmic side. Residues 357 to 377 (VTGDAIGAALLGGLGAMMTPV) traverse the membrane as a helical segment. Position 378 (alanine 378) is a topological domain, periplasmic. Residues 379-399 (SASASGFGLLIIGVLLLLVLV) traverse the membrane as a helical segment. The Cytoplasmic portion of the chain corresponds to 400 to 416 (ELRRFRQTPPQMTASDS).

This sequence belongs to the major facilitator superfamily. EntS (TC 2.A.1.38) family.

The protein resides in the cell inner membrane. Component of an export pathway for enterobactin. The protein is Enterobactin exporter EntS of Escherichia coli O7:K1 (strain IAI39 / ExPEC).